The sequence spans 156 residues: CD-NTase-associated protein 8 (156 aa).

Belongs to the bacterial HORMA family. HORMA3 subfamily. As to quaternary structure, interacts with Cap7 (also called HORMA2) and CdnC; forms CdnD:Cap7:Cap8 (also called CdnD:HORMA2:HORMA3) complexes with stoichiometries of 1:1:1 and 2:1:1.

Its function is as follows. CBASS (cyclic oligonucleotide-based antiphage signaling system) provides immunity against bacteriophage. The CD-NTase protein synthesizes cyclic nucleotides in response to infection; these serve as specific second messenger signals. The signals activate a diverse range of effectors, leading to bacterial cell death and thus abortive phage infection. A type III-C(AAA) CBASS system. A member of the CBASS system in this bacteria. It does not seem to bind a closure peptide, its exact function is unknown. This is CD-NTase-associated protein 8 from Pseudomonas aeruginosa.